The chain runs to 103 residues: Cytochrome c-552 (103 aa).

A signal peptide spans 1–22 (MKTAWLGTFAASALLVAGYAQA). Cysteine 32, cysteine 35, histidine 36, and methionine 81 together coordinate heme c.

Monomer. In terms of processing, binds 1 heme c group covalently per subunit.

The protein resides in the periplasm. Functionally, monoheme c-type cytochrome. Probable electron donor to membrane cytochrome oxidase and to periplasmic nitrite reductase. This chain is Cytochrome c-552 (cyt), found in Nitrosomonas europaea (strain ATCC 19718 / CIP 103999 / KCTC 2705 / NBRC 14298).